The sequence spans 667 residues: Acetolactate synthase 1, chloroplastic (667 aa).

The span at 1–35 (MAAAAPSPSSSAFSKTLSPSSSTSSTLLPRSTFPF) shows a compositional bias: low complexity. Residues 1 to 45 (MAAAAPSPSSSAFSKTLSPSSSTSSTLLPRSTFPFPHHPHKTTPP) are disordered. The transit peptide at 1-94 (MAAAAPSPSS…VSRFAPDEPR (94 aa)) directs the protein to the chloroplast. Glu141 contributes to the thiamine diphosphate binding site. A disulfide bridge connects residues Cys161 and Cys307. Residues Arg243, 349 to 370 (HGTVYANYAVDSSDLLLAFGVR), and 392 to 411 (DIDSAEIGKNKQPHVSICAD) contribute to the FAD site. A thiamine pyrophosphate binding region spans residues 484-564 (QHQMWAAQYY…VKIMLLNNQH (81 aa)). Mg(2+)-binding residues include Asp535 and Asn562.

This sequence belongs to the TPP enzyme family. The cofactor is Mg(2+). Requires thiamine diphosphate as cofactor.

The protein resides in the plastid. The protein localises to the chloroplast. The enzyme catalyses 2 pyruvate + H(+) = (2S)-2-acetolactate + CO2. It functions in the pathway amino-acid biosynthesis; L-isoleucine biosynthesis; L-isoleucine from 2-oxobutanoate: step 1/4. Its pathway is amino-acid biosynthesis; L-valine biosynthesis; L-valine from pyruvate: step 1/4. The polypeptide is Acetolactate synthase 1, chloroplastic (ALS SURA) (Nicotiana tabacum (Common tobacco)).